The primary structure comprises 914 residues: Protein translocase subunit SecA (914 aa).

ATP-binding positions include Gln-87, 105-109 (GEGKT), and Asp-508. 4 residues coordinate Zn(2+): Cys-898, Cys-900, Cys-909, and His-910.

It belongs to the SecA family. Monomer and homodimer. Part of the essential Sec protein translocation apparatus which comprises SecA, SecYEG and auxiliary proteins SecDF-YajC and YidC. Zn(2+) is required as a cofactor.

It is found in the cell inner membrane. Its subcellular location is the cytoplasm. The enzyme catalyses ATP + H2O + cellular proteinSide 1 = ADP + phosphate + cellular proteinSide 2.. Functionally, part of the Sec protein translocase complex. Interacts with the SecYEG preprotein conducting channel. Has a central role in coupling the hydrolysis of ATP to the transfer of proteins into and across the cell membrane, serving both as a receptor for the preprotein-SecB complex and as an ATP-driven molecular motor driving the stepwise translocation of polypeptide chains across the membrane. The chain is Protein translocase subunit SecA from Xylella fastidiosa (strain 9a5c).